The chain runs to 163 residues: MNIKLVTYFLILVSSLKVNADLNHIQDSFKYQEAEQLTIELPWNDCTAIHKFLEEKLFFSEQQIKKENKIHEKYKQFYLQHNNKLSDFSMQFLEKKSEINSVETLISGFLKFCEDNFQTSKSKSHSLNFFQKQQDQWLHNIRNENYKTYYKKKYEDNTFRNIN.

This is an uncharacterized protein from Rickettsia prowazekii (strain Madrid E).